Reading from the N-terminus, the 290-residue chain is UPF0761 membrane protein YihY (290 aa).

At Met-1–Ser-43 the chain is on the cytoplasmic side. Residues Leu-44–Phe-64 traverse the membrane as a helical segment. The Periplasmic segment spans residues Ser-65–Ala-103. Residues Val-104–Leu-124 traverse the membrane as a helical segment. Residues Asn-125 to Ser-139 are Cytoplasmic-facing. The chain crosses the membrane as a helical span at residues Phe-140 to Ile-160. Residues Ser-161–Asn-179 lie on the Periplasmic side of the membrane. The helical transmembrane segment at Val-180–Val-200 threads the bilayer. Topologically, residues Pro-201–Asp-209 are cytoplasmic. Residues Ala-210 to Leu-230 form a helical membrane-spanning segment. At Tyr-231–Gly-243 the chain is on the periplasmic side. The helical transmembrane segment at Val-244–Leu-264 threads the bilayer. Topologically, residues Gly-265–Pro-290 are cytoplasmic.

It belongs to the UPF0761 family.

The protein localises to the cell inner membrane. This is UPF0761 membrane protein YihY from Salmonella typhimurium (strain LT2 / SGSC1412 / ATCC 700720).